The chain runs to 249 residues: Small ribosomal subunit protein uS3 (249 aa).

The 70-residue stretch at 39–108 folds into the KH type-2 domain; that stretch reads IRQLINKKLA…TVAVNVAEIP (70 aa). The disordered stretch occupies residues 214 to 249; sequence ETFARPQRRDRDERRPEGGDRPARRRPTARRRTGGE. Over residues 220–235 the composition is skewed to basic and acidic residues; that stretch reads QRRDRDERRPEGGDRP. Residues 236–249 are compositionally biased toward basic residues; that stretch reads ARRRPTARRRTGGE.

This sequence belongs to the universal ribosomal protein uS3 family. As to quaternary structure, part of the 30S ribosomal subunit. Forms a tight complex with proteins S10 and S14.

Binds the lower part of the 30S subunit head. Binds mRNA in the 70S ribosome, positioning it for translation. This is Small ribosomal subunit protein uS3 from Deinococcus radiodurans (strain ATCC 13939 / DSM 20539 / JCM 16871 / CCUG 27074 / LMG 4051 / NBRC 15346 / NCIMB 9279 / VKM B-1422 / R1).